A 457-amino-acid polypeptide reads, in one-letter code: Bifunctional protein GlmU (457 aa).

Positions Met-1–Arg-228 are pyrophosphorylase. Residues Leu-9–Gly-12, Lys-23, Gln-73, and Gly-78–Thr-79 contribute to the UDP-N-acetyl-alpha-D-glucosamine site. Asp-102 contributes to the Mg(2+) binding site. UDP-N-acetyl-alpha-D-glucosamine contacts are provided by Gly-139, Glu-154, Asn-169, and Asn-226. Mg(2+) is bound at residue Asn-226. The linker stretch occupies residues Val-229–Asn-249. Residues Gly-250 to Leu-457 form an N-acetyltransferase region. UDP-N-acetyl-alpha-D-glucosamine contacts are provided by Arg-331 and Lys-349. His-361 functions as the Proton acceptor in the catalytic mechanism. Positions 364 and 375 each coordinate UDP-N-acetyl-alpha-D-glucosamine. Acetyl-CoA contacts are provided by residues Asn-384 to Tyr-385, Ala-421, and Arg-438.

It in the N-terminal section; belongs to the N-acetylglucosamine-1-phosphate uridyltransferase family. This sequence in the C-terminal section; belongs to the transferase hexapeptide repeat family. Homotrimer. Requires Mg(2+) as cofactor.

It localises to the cytoplasm. The catalysed reaction is alpha-D-glucosamine 1-phosphate + acetyl-CoA = N-acetyl-alpha-D-glucosamine 1-phosphate + CoA + H(+). It catalyses the reaction N-acetyl-alpha-D-glucosamine 1-phosphate + UTP + H(+) = UDP-N-acetyl-alpha-D-glucosamine + diphosphate. It participates in nucleotide-sugar biosynthesis; UDP-N-acetyl-alpha-D-glucosamine biosynthesis; N-acetyl-alpha-D-glucosamine 1-phosphate from alpha-D-glucosamine 6-phosphate (route II): step 2/2. The protein operates within nucleotide-sugar biosynthesis; UDP-N-acetyl-alpha-D-glucosamine biosynthesis; UDP-N-acetyl-alpha-D-glucosamine from N-acetyl-alpha-D-glucosamine 1-phosphate: step 1/1. It functions in the pathway bacterial outer membrane biogenesis; LPS lipid A biosynthesis. In terms of biological role, catalyzes the last two sequential reactions in the de novo biosynthetic pathway for UDP-N-acetylglucosamine (UDP-GlcNAc). The C-terminal domain catalyzes the transfer of acetyl group from acetyl coenzyme A to glucosamine-1-phosphate (GlcN-1-P) to produce N-acetylglucosamine-1-phosphate (GlcNAc-1-P), which is converted into UDP-GlcNAc by the transfer of uridine 5-monophosphate (from uridine 5-triphosphate), a reaction catalyzed by the N-terminal domain. This Caldanaerobacter subterraneus subsp. tengcongensis (strain DSM 15242 / JCM 11007 / NBRC 100824 / MB4) (Thermoanaerobacter tengcongensis) protein is Bifunctional protein GlmU.